We begin with the raw amino-acid sequence, 127 residues long: Modulator protein MzrA (127 aa).

The Cytoplasmic portion of the chain corresponds to 1–11 (MRKPRVTLRHL). A helical membrane pass occupies residues 12–31 (AWSTMLLMVLGTGMLFWSAV). Residues 32-127 (RQQESTLAIR…RLRDAPHRMG (96 aa)) are Periplasmic-facing.

The protein belongs to the MzrA family. Interacts with EnvZ.

Its subcellular location is the cell inner membrane. Its function is as follows. Modulates the activity of the EnvZ/OmpR two-component regulatory system, probably by directly modulating EnvZ enzymatic activity and increasing stability of phosphorylated OmpR. The polypeptide is Modulator protein MzrA (Citrobacter rodentium (strain ICC168) (Citrobacter freundii biotype 4280)).